Reading from the N-terminus, the 415-residue chain is Adenosylhomocysteinase (415 aa).

Substrate-binding residues include Thr53, Asp124, and Glu147. NAD(+) is bound at residue 148–150; that stretch reads TTT. Substrate contacts are provided by Lys177 and Asp181. Residues Asn182, 211–216, Glu234, Asn269, 290–292, and Asn337 contribute to the NAD(+) site; these read GYGWVG and SGH.

The protein belongs to the adenosylhomocysteinase family. NAD(+) is required as a cofactor.

It is found in the cytoplasm. The catalysed reaction is S-adenosyl-L-homocysteine + H2O = L-homocysteine + adenosine. It participates in amino-acid biosynthesis; L-homocysteine biosynthesis; L-homocysteine from S-adenosyl-L-homocysteine: step 1/1. May play a key role in the regulation of the intracellular concentration of adenosylhomocysteine. This chain is Adenosylhomocysteinase, found in Sulfurisphaera tokodaii (strain DSM 16993 / JCM 10545 / NBRC 100140 / 7) (Sulfolobus tokodaii).